Consider the following 217-residue polypeptide: Ras-related protein RABA1f (217 aa).

20 to 27 (GDSGVGKS) is a GTP binding site. The short motif at 42–50 (SKSTIGVEF) is the Effector region element. Residues 68–72 (DTAGQ), 126–129 (NKAD), and 156–157 (SA) each bind GTP. Residues C214 and C215 are each lipidated (S-geranylgeranyl cysteine).

This sequence belongs to the small GTPase superfamily. Rab family.

The protein resides in the cell membrane. Intracellular vesicle trafficking and protein transport. This chain is Ras-related protein RABA1f (RABA1F), found in Arabidopsis thaliana (Mouse-ear cress).